A 310-amino-acid polypeptide reads, in one-letter code: Methionyl-tRNA formyltransferase (310 aa).

(6S)-5,6,7,8-tetrahydrofolate is bound at residue 110 to 113 (SLLP).

The protein belongs to the Fmt family.

It catalyses the reaction L-methionyl-tRNA(fMet) + (6R)-10-formyltetrahydrofolate = N-formyl-L-methionyl-tRNA(fMet) + (6S)-5,6,7,8-tetrahydrofolate + H(+). Its function is as follows. Attaches a formyl group to the free amino group of methionyl-tRNA(fMet). The formyl group appears to play a dual role in the initiator identity of N-formylmethionyl-tRNA by promoting its recognition by IF2 and preventing the misappropriation of this tRNA by the elongation apparatus. This Clostridium tetani (strain Massachusetts / E88) protein is Methionyl-tRNA formyltransferase.